Consider the following 170-residue polypeptide: Peptide deformylase (170 aa).

Residues Cys-94 and His-136 each coordinate Fe cation. Glu-137 is a catalytic residue. His-140 serves as a coordination point for Fe cation.

The protein belongs to the polypeptide deformylase family. Requires Fe(2+) as cofactor.

It carries out the reaction N-terminal N-formyl-L-methionyl-[peptide] + H2O = N-terminal L-methionyl-[peptide] + formate. In terms of biological role, removes the formyl group from the N-terminal Met of newly synthesized proteins. Requires at least a dipeptide for an efficient rate of reaction. N-terminal L-methionine is a prerequisite for activity but the enzyme has broad specificity at other positions. The chain is Peptide deformylase from Xylella fastidiosa (strain M12).